The primary structure comprises 176 residues: ATP-dependent protease subunit HslV (176 aa).

Residue T5 is part of the active site. Residues S161, C164, and T167 each contribute to the Na(+) site.

This sequence belongs to the peptidase T1B family. HslV subfamily. In terms of assembly, a double ring-shaped homohexamer of HslV is capped on each side by a ring-shaped HslU homohexamer. The assembly of the HslU/HslV complex is dependent on binding of ATP.

Its subcellular location is the cytoplasm. The enzyme catalyses ATP-dependent cleavage of peptide bonds with broad specificity.. Allosterically activated by HslU binding. Protease subunit of a proteasome-like degradation complex believed to be a general protein degrading machinery. The protein is ATP-dependent protease subunit HslV of Caldanaerobacter subterraneus subsp. tengcongensis (strain DSM 15242 / JCM 11007 / NBRC 100824 / MB4) (Thermoanaerobacter tengcongensis).